Consider the following 592-residue polypeptide: Protein US23 (592 aa).

Residues 407-491 (PRSLGDGEEE…NNVVPNVDRR (85 aa)) form a disordered region. Residues 460-481 (ADDEEQGEDDDDSGAEPMEPEE) show a composition bias toward acidic residues.

This sequence belongs to the herpesviridae US22 family.

The protein localises to the virion tegument. The sequence is that of Protein US23 (US23) from Homo sapiens (Human).